Reading from the N-terminus, the 169-residue chain is Ubiquitin-conjugating enzyme E2 2 (169 aa).

One can recognise a UBC core domain in the interval 4-150 (AAKRRLIRDF…VKKTVELSWV (147 aa)). Cysteine 88 (glycyl thioester intermediate) is an active-site residue.

The protein belongs to the ubiquitin-conjugating enzyme family.

It localises to the cytoplasm. The protein resides in the nucleus. The catalysed reaction is S-ubiquitinyl-[E1 ubiquitin-activating enzyme]-L-cysteine + [E2 ubiquitin-conjugating enzyme]-L-cysteine = [E1 ubiquitin-activating enzyme]-L-cysteine + S-ubiquitinyl-[E2 ubiquitin-conjugating enzyme]-L-cysteine.. It participates in protein modification; protein ubiquitination. Its function is as follows. Catalyzes the covalent attachment of ubiquitin to other proteins. Plays a role in transcription regulation by catalyzing the monoubiquitination of histone H2B to form H2BK123ub1. H2BK123ub1 gives a specific tag for epigenetic transcriptional activation and is also a prerequisite for H3K4me and H3K79me formation. Also involved in postreplication repair of UV-damaged DNA, in N-end rule-dependent protein degradation and in sporulation. This Cryptococcus neoformans var. neoformans serotype D (strain B-3501A) (Filobasidiella neoformans) protein is Ubiquitin-conjugating enzyme E2 2 (UBC2).